A 279-amino-acid polypeptide reads, in one-letter code: Protein COP1 SUPPRESSOR 2 (279 aa).

Disordered stretches follow at residues 1–29 (MPPK…ISEE) and 57–79 (SSTA…EGEK). The segment covering 68 to 79 (KPVEKTETEGEK) has biased composition (basic and acidic residues). The stretch at 86 to 183 (DTFAQETAVL…EETEAAKKLL (98 aa)) forms a coiled coil. Residues 217 to 229 (LRREHPELYKDRG) show a composition bias toward basic and acidic residues. A disordered region spans residues 217–279 (LRREHPELYK…KRERNRVMRR (63 aa)). The span at 250–260 (ADSGKSRQAAT) shows a compositional bias: polar residues. The span at 270–279 (KRERNRVMRR) shows a compositional bias: basic residues.

It belongs to the TLS1 family. As to quaternary structure, interacts with COP1.

It is found in the nucleus. The protein localises to the nucleus speckle. Functionally, inhibits E3 ubiquitin-protein ligase activity of COP1, a central repressor of seedling photomorphogenesis. Represses COP1-mediated turnover of HY5 in the dark. Required for primary root development under normal light growth conditions. The polypeptide is Protein COP1 SUPPRESSOR 2 (Arabidopsis thaliana (Mouse-ear cress)).